Here is a 177-residue protein sequence, read N- to C-terminus: Large ribosomal subunit protein uL6 (177 aa).

It belongs to the universal ribosomal protein uL6 family. In terms of assembly, part of the 50S ribosomal subunit.

Functionally, this protein binds to the 23S rRNA, and is important in its secondary structure. It is located near the subunit interface in the base of the L7/L12 stalk, and near the tRNA binding site of the peptidyltransferase center. This chain is Large ribosomal subunit protein uL6, found in Bordetella avium (strain 197N).